The sequence spans 219 residues: Octanoyltransferase (219 aa).

The BPL/LPL catalytic domain maps to 24-212; it reads KFRRECILFL…NLNSFLGPIS (189 aa). Residues 69-76, 140-142, and 153-155 each bind substrate; these read RGGDFTAH, SIG, and GVA. The active-site Acyl-thioester intermediate is the Cys-171.

Belongs to the LipB family.

The protein localises to the cytoplasm. The catalysed reaction is octanoyl-[ACP] + L-lysyl-[protein] = N(6)-octanoyl-L-lysyl-[protein] + holo-[ACP] + H(+). It functions in the pathway protein modification; protein lipoylation via endogenous pathway; protein N(6)-(lipoyl)lysine from octanoyl-[acyl-carrier-protein]: step 1/2. In terms of biological role, catalyzes the transfer of endogenously produced octanoic acid from octanoyl-acyl-carrier-protein onto the lipoyl domains of lipoate-dependent enzymes. Lipoyl-ACP can also act as a substrate although octanoyl-ACP is likely to be the physiological substrate. This is Octanoyltransferase from Leptospira borgpetersenii serovar Hardjo-bovis (strain JB197).